Consider the following 498-residue polypeptide: MRMNPTTSGSGVTTLDKKTLGRIAQIIGPVLDVAFPPGKMPNIYNALVVKGRDTAGQPINVTCEVQQLLGNNRVRAVAMSATDGLTRGMDVIDTGAPLSVPVGGATLGRIFNVLGEPVDNLGPVDTSTTFPIHRSAPAFIQLDTKLSIFETGIKVVDLLAPYRRGGKIGLFGGAGVGKTVLIMELINNIAKAHGGVSVFGGVGERTREGNDLYMEMKESGVINEKNIPESKVALVYGQMNEPPGARMRVGLTALTMAEYFRDVNEQDVLLFIDNIFRFVQAGSEVSALLGRMPSAVGYQPTLSTEMGSLQERITSTKEGSITSIQAVYVPADDLTDPAPATTFAHLDATTVLSRGLAAKGIYPAVDPLDSTSTMLQPRIVGEEHYDTAQEVKQTLQRYKELQDIIAILGLDELSEEDRLTVARARKIERFLSQPFFVAEVFTGSPGKYVGLAETIRGFQLILSGELDGLPEQAFYLVGNIDEATAKAMNLEMESNLKK.

172–179 (GGAGVGKT) is an ATP binding site.

The protein belongs to the ATPase alpha/beta chains family. F-type ATPases have 2 components, CF(1) - the catalytic core - and CF(0) - the membrane proton channel. CF(1) has five subunits: alpha(3), beta(3), gamma(1), delta(1), epsilon(1). CF(0) has four main subunits: a(1), b(1), b'(1) and c(9-12).

The protein localises to the plastid. It is found in the chloroplast thylakoid membrane. The enzyme catalyses ATP + H2O + 4 H(+)(in) = ADP + phosphate + 5 H(+)(out). Produces ATP from ADP in the presence of a proton gradient across the membrane. The catalytic sites are hosted primarily by the beta subunits. This Lactuca sativa (Garden lettuce) protein is ATP synthase subunit beta, chloroplastic.